Reading from the N-terminus, the 1070-residue chain is DNA-directed RNA polymerase subunit beta (1070 aa).

This sequence belongs to the RNA polymerase beta chain family. In plastids the minimal PEP RNA polymerase catalytic core is composed of four subunits: alpha, beta, beta', and beta''. When a (nuclear-encoded) sigma factor is associated with the core the holoenzyme is formed, which can initiate transcription.

It localises to the plastid. The protein localises to the chloroplast. The enzyme catalyses RNA(n) + a ribonucleoside 5'-triphosphate = RNA(n+1) + diphosphate. Its function is as follows. DNA-dependent RNA polymerase catalyzes the transcription of DNA into RNA using the four ribonucleoside triphosphates as substrates. This Angiopteris evecta (Mule's foot fern) protein is DNA-directed RNA polymerase subunit beta.